Here is a 698-residue protein sequence, read N- to C-terminus: MTNGSFRQIINQLDMRWRRRVPVIHQTETAECGLACLAMICGHFGKNIDLISLRRKFNLSARGANLAGINGIAEQLGMVTRALSLELDELGALKMPCILHWDFSHFVVLVSVKRNRYVLHDPARGRRYLGREEMSRYFTGIALEVWPGSEFLAETQQIRISLRSLINSIYGIKRTLAKIFCLSVVIEAINLVMPVGTQLVMDHAIPAGDRGLLTLISAGLMFFILLRAAVSMLRAWSSLVMSTLINIQWQSGLFNHLLRLPLAFFERRKLGDIQSRFGSLDTLRATFTTCVVGAIMDSIMVVGVFVMMLLYGGYLTWIVLGFTMVYVLIRLVTYGYYRQISEETLVRGARASSYFMESLYGIATVKIQGMAGIRGTHWLNLKIDAINSGIKLTKMDLLFGGINTFVAACDQVAILWLGASLVIDNQMTIGMFVAFGSFRGQFSDRVASLTSFLLQLRIMSLHNERIADIALHEKEEKKPEIEIVADMSPVSLETTDLSYRYDSQSAQVFSGLNLSVAPGESVAITGASGAGKTTLMKVLCGLFEPDSGKVLVNGTDIRQLGINNYHRMIACVMQDDRLFSGSIRENICGFAEETDDEWMTECARASHIHDVIMKMPMGYETLIGELGEGLSGGQKQRIFIARALYRKPGILFMDEATSSLDTESERFVNAAIKKMNITRVIIAHRETTLRTVDRIISI.

Positions 26–145 (QTETAECGLA…RYFTGIALEV (120 aa)) constitute a Peptidase C39 domain. Residue Cys-32 is part of the active site. 5 helical membrane passes run 33 to 53 (GLAC…LISL), 90 to 110 (LGAL…VVLV), 289 to 311 (TCVV…MLLY), 315 to 337 (LTWI…YGYY), and 397 to 417 (LLFG…ILWL). Positions 176 to 458 (LAKIFCLSVV…LTSFLLQLRI (283 aa)) constitute an ABC transmembrane type-1 domain. An ABC transporter domain is found at 492–698 (LETTDLSYRY…LRTVDRIISI (207 aa)). 526–533 (GASGAGKT) provides a ligand contact to ATP.

Belongs to the ABC transporter superfamily.

It is found in the cell membrane. Functionally, probably involved, in conjunction with MchE, in the secretion of microcin H47. In Escherichia coli, this protein is Probable microcin-H47 secretion/processing ATP-binding protein MchF (mchF).